The following is a 182-amino-acid chain: UPF0215 protein Pcal_0119 (182 aa).

The protein belongs to the UPF0215 family.

This Pyrobaculum calidifontis (strain DSM 21063 / JCM 11548 / VA1) protein is UPF0215 protein Pcal_0119.